A 620-amino-acid polypeptide reads, in one-letter code: MALLQISEPGMSAAPHRHRLAAGIDLGTTNSLVATVRSGSAACLPDAEGRVTLPSVVRYLENGGIEVGKTALSAQKTDPLNTVSSAKRLIGRTLADLHQNTHYLPYRFGDNQRVIELHTRQGVKTPVEVSAEILKTLKSRAEETLGGDLVGVVITVPAYFDDAQRQATKDAARLAGLNVLRLLNEPTAAAIAYGLDNASEGTFVVYDLGGGTFDVSVLQLTKGLFEVKATGGNSALGGDDFDHRLFCRLLEQNGLSQLNEQDSQLLLSLVRAAKEQLTTQTEARIQATLSDGMAIDTSISRAEFHNLTQHLVMKTLEPVTQALKDAGVGKNEVKGVIMVGGSTRMLHVQQAVATFFGQTPLNNLNPDEVVALGAAIQANVLAGNKTDGEWLLLDVTPLSLGLETYGGLAEKIIPRNSTIPTARAQDFTTFKDGQTAMTIHVVQGERELVADCRSLAKFTLRGIPPMAAGAARIRVTFQIDADGLLSVSAQEQSTGVQAQIEVKPSYGLDDDTITQMLKDSMSNAAEDMAARARAEAVVEAESLTDAVNAALELDSDLLDAEELQQIRQGIADLQGRLKDGKAEDIRAAAAKLGSITDNFAAKRMNRNIQRALTGQSVDNI.

This sequence belongs to the heat shock protein 70 family.

In terms of biological role, chaperone involved in the maturation of iron-sulfur cluster-containing proteins. Has a low intrinsic ATPase activity which is markedly stimulated by HscB. This chain is Chaperone protein HscA homolog, found in Neisseria meningitidis serogroup B (strain ATCC BAA-335 / MC58).